Consider the following 347-residue polypeptide: Zinc finger protein CONSTANS-LIKE 2 (347 aa).

Zn(2+) contacts are provided by Cys16, Cys19, Cys39, His44, Cys59, Cys62, Cys82, and His87. The segment at 16–58 adopts a B box-type 1; atypical zinc-finger fold; it reads CDTCRSAACTVYCEADSAYLCTTCDARVHAANRVASRHERVRV. The segment at 59 to 101 adopts a B box-type 2; atypical zinc-finger fold; that stretch reads CQSCESAPAAFLCKADAASLCTACDAEIHSANPLARRHQRVPI. The CCT domain maps to 278–320; the sequence is REARVLRYREKKKTRKFDKTIRYASRKAYAEIRPRIKGRFAKR.

Belongs to the CONSTANS family. In terms of tissue distribution, highly expressed in leaves. Expressed at lower levels in stems, flowers and siliques. Not detected in roots.

It localises to the nucleus. In terms of biological role, putative transcription factor. Does not affect flowering time. The protein is Zinc finger protein CONSTANS-LIKE 2 (COL2) of Arabidopsis thaliana (Mouse-ear cress).